Reading from the N-terminus, the 147-residue chain is Nucleoside diphosphate kinase (147 aa).

ATP contacts are provided by K11, F59, R87, T93, R104, and N114. H117 acts as the Pros-phosphohistidine intermediate in catalysis.

This sequence belongs to the NDK family. The cofactor is Mg(2+).

Its subcellular location is the cytoplasm. It carries out the reaction a 2'-deoxyribonucleoside 5'-diphosphate + ATP = a 2'-deoxyribonucleoside 5'-triphosphate + ADP. The catalysed reaction is a ribonucleoside 5'-diphosphate + ATP = a ribonucleoside 5'-triphosphate + ADP. Major role in the synthesis of nucleoside triphosphates other than ATP. The ATP gamma phosphate is transferred to the NDP beta phosphate via a ping-pong mechanism, using a phosphorylated active-site intermediate. The polypeptide is Nucleoside diphosphate kinase (Sulfurisphaera tokodaii (strain DSM 16993 / JCM 10545 / NBRC 100140 / 7) (Sulfolobus tokodaii)).